A 77-amino-acid chain; its full sequence is Chassatide C13 (77 aa).

A signal peptide spans 1-24 (MAKFATQLLLFVLIASLVMLEVHA). Positions 25-44 (SNTFQVPDLGKRLLMNRDPN) are cleaved as a propeptide — removed in mature form. Positions 45-75 (GFPCAESCVYIPCTVTALLGCSCRNRVCYRN) form a cross-link, cyclopeptide (Gly-Asn). 3 cysteine pairs are disulfide-bonded: Cys48/Cys65, Cys52/Cys67, and Cys57/Cys72. A propeptide spans 76 to 77 (EL) (removed in mature form).

Post-translationally, this is a cyclic peptide. In terms of tissue distribution, expressed in fruit and pedicel but not in root, leaf and stem (at protein level).

In terms of biological role, probably participates in a plant defense mechanism. The chain is Chassatide C13 from Chassalia chartacea (Chassalia curviflora).